The sequence spans 429 residues: Serine--tRNA ligase (429 aa).

Position 235-237 (235-237 (TAE)) interacts with L-serine. 266–268 (RSE) is an ATP binding site. E289 contacts L-serine. 353–356 (EISS) provides a ligand contact to ATP. S389 serves as a coordination point for L-serine.

This sequence belongs to the class-II aminoacyl-tRNA synthetase family. Type-1 seryl-tRNA synthetase subfamily. Homodimer. The tRNA molecule binds across the dimer.

The protein resides in the cytoplasm. The catalysed reaction is tRNA(Ser) + L-serine + ATP = L-seryl-tRNA(Ser) + AMP + diphosphate + H(+). The enzyme catalyses tRNA(Sec) + L-serine + ATP = L-seryl-tRNA(Sec) + AMP + diphosphate + H(+). The protein operates within aminoacyl-tRNA biosynthesis; selenocysteinyl-tRNA(Sec) biosynthesis; L-seryl-tRNA(Sec) from L-serine and tRNA(Sec): step 1/1. Catalyzes the attachment of serine to tRNA(Ser). Is also able to aminoacylate tRNA(Sec) with serine, to form the misacylated tRNA L-seryl-tRNA(Sec), which will be further converted into selenocysteinyl-tRNA(Sec). The polypeptide is Serine--tRNA ligase (Histophilus somni (strain 129Pt) (Haemophilus somnus)).